The chain runs to 189 residues: Elongation factor P (189 aa).

N6-(3,6-diaminohexanoyl)-5-hydroxylysine is present on K34.

This sequence belongs to the elongation factor P family. May be beta-lysylated on the epsilon-amino group of Lys-34 by the combined action of EpmA and EpmB, and then hydroxylated on the C5 position of the same residue by EpmC (if this protein is present). Lysylation is critical for the stimulatory effect of EF-P on peptide-bond formation. The lysylation moiety may extend toward the peptidyltransferase center and stabilize the terminal 3-CCA end of the tRNA. Hydroxylation of the C5 position on Lys-34 may allow additional potential stabilizing hydrogen-bond interactions with the P-tRNA.

The protein resides in the cytoplasm. The protein operates within protein biosynthesis; polypeptide chain elongation. Functionally, involved in peptide bond synthesis. Alleviates ribosome stalling that occurs when 3 or more consecutive Pro residues or the sequence PPG is present in a protein, possibly by augmenting the peptidyl transferase activity of the ribosome. Modification of Lys-34 is required for alleviation. The protein is Elongation factor P of Saccharophagus degradans (strain 2-40 / ATCC 43961 / DSM 17024).